The following is a 445-amino-acid chain: Homoserine dehydrogenase (445 aa).

Positions 26, 28, and 29 each coordinate NADPH. Residues valine 29 and alanine 58 each coordinate NAD(+). Valine 29 serves as a coordination point for NADP(+). NADPH is bound at residue lysine 119. Lysine 119 serves as a coordination point for NADP(+). 4 residues coordinate Na(+): glutamate 143, valine 146, glycine 148, and isoleucine 150. Residues glycine 201 and glutamate 204 each contribute to the NADP(+) site. L-homoserine is bound by residues glutamate 204 and aspartate 215. The active-site Proton donor is lysine 219. Glycine 321 is an NADPH binding site. Position 321 (glycine 321) interacts with NAD(+). Position 321 (glycine 321) interacts with NADP(+). The ACT domain occupies 368–445 (HLDMDVEDRV…INSVIRLERD (78 aa)).

The protein belongs to the homoserine dehydrogenase family. The cofactor is a metal cation.

It catalyses the reaction L-homoserine + NADP(+) = L-aspartate 4-semialdehyde + NADPH + H(+). The catalysed reaction is L-homoserine + NAD(+) = L-aspartate 4-semialdehyde + NADH + H(+). Its pathway is amino-acid biosynthesis; L-methionine biosynthesis via de novo pathway; L-homoserine from L-aspartate: step 3/3. It functions in the pathway amino-acid biosynthesis; L-threonine biosynthesis; L-threonine from L-aspartate: step 3/5. With respect to regulation, feedback inhibition by threonine. Its function is as follows. Catalyzes the conversion of L-aspartate-beta-semialdehyde (L-Asa) to L-homoserine (L-Hse), the third step in the biosynthesis of threonine and methionine from aspartate. This is Homoserine dehydrogenase (hom) from Corynebacterium glutamicum (strain ATCC 13032 / DSM 20300 / JCM 1318 / BCRC 11384 / CCUG 27702 / LMG 3730 / NBRC 12168 / NCIMB 10025 / NRRL B-2784 / 534).